The following is a 298-amino-acid chain: uncharacterized protein (298 aa).

Helical transmembrane passes span valine 10–leucine 30, leucine 36–phenylalanine 56, isoleucine 76–alanine 96, phenylalanine 101–isoleucine 121, glycine 142–phenylalanine 162, alanine 179–phenylalanine 199, glycine 212–alanine 232, valine 243–histidine 263, and alanine 271–tryptophan 291. EamA domains lie at phenylalanine 17–phenylalanine 148 and phenylalanine 162–phenylalanine 286.

It belongs to the EamA transporter family.

Its subcellular location is the cell membrane. This is an uncharacterized protein from Bacillus subtilis (strain 168).